A 541-amino-acid chain; its full sequence is Ankyrin repeat domain-containing protein 13C (541 aa).

Basic and acidic residues predominate over residues M1 to G20. The tract at residues M1–D27 is disordered. ANK repeat units follow at residues P111 to N142, H143 to V172, and Q176 to R205. S411 is subject to Phosphoserine.

The protein resides in the endoplasmic reticulum membrane. Acts as a molecular chaperone for G protein-coupled receptors, regulating their biogenesis and exit from the ER. In Homo sapiens (Human), this protein is Ankyrin repeat domain-containing protein 13C (ANKRD13C).